The following is a 259-amino-acid chain: Phosphate import ATP-binding protein PstB 1 (259 aa).

One can recognise an ABC transporter domain in the interval 7–254 (VKPEDVYQIN…PDDHRTKDYI (248 aa)). Residue 45 to 52 (GPSGCGKS) coordinates ATP.

The protein belongs to the ABC transporter superfamily. Phosphate importer (TC 3.A.1.7) family. As to quaternary structure, the complex is composed of two ATP-binding proteins (PstB), two transmembrane proteins (PstC and PstA) and a solute-binding protein (PstS).

Its subcellular location is the cell membrane. The catalysed reaction is phosphate(out) + ATP + H2O = ADP + 2 phosphate(in) + H(+). Part of the ABC transporter complex PstSACB involved in phosphate import. Responsible for energy coupling to the transport system. This chain is Phosphate import ATP-binding protein PstB 1, found in Bacillus licheniformis (strain ATCC 14580 / DSM 13 / JCM 2505 / CCUG 7422 / NBRC 12200 / NCIMB 9375 / NCTC 10341 / NRRL NRS-1264 / Gibson 46).